The primary structure comprises 247 residues: MSKLFWAMLSFITRLPVPRRWSQGLDFEHYSRGIITFPLIGLLLGAISGLVFMVLQAWCGVPLAALFSVLVLALMTGGFHLDGLADTCDGVFSARSRDRMLEIMRDSRLGTHGGLALIFVVLAKILVLSELALRGEPILASLAAACAVSRGTAALLMYRHRYAREEGLGNVFIGKIDGRQTCVTLGLAAIFAAVLLPGMHGVAAMVVTMVAIFILGQLLKRTLGGQTGDTLGAAIEFGELVFLLALL.

5 helical membrane passes run 34 to 54 (IITF…VFMV), 59 to 79 (CGVP…TGGF), 113 to 133 (GGLA…ELAL), 138 to 158 (ILAS…LLMY), and 194 to 214 (VLLP…AIFI).

This sequence belongs to the CobS family. Mg(2+) serves as cofactor.

Its subcellular location is the cell inner membrane. The catalysed reaction is alpha-ribazole + adenosylcob(III)inamide-GDP = adenosylcob(III)alamin + GMP + H(+). It catalyses the reaction alpha-ribazole 5'-phosphate + adenosylcob(III)inamide-GDP = adenosylcob(III)alamin 5'-phosphate + GMP + H(+). It functions in the pathway cofactor biosynthesis; adenosylcobalamin biosynthesis; adenosylcobalamin from cob(II)yrinate a,c-diamide: step 7/7. Joins adenosylcobinamide-GDP and alpha-ribazole to generate adenosylcobalamin (Ado-cobalamin). Also synthesizes adenosylcobalamin 5'-phosphate from adenosylcobinamide-GDP and alpha-ribazole 5'-phosphate. The chain is Adenosylcobinamide-GDP ribazoletransferase from Escherichia coli O7:K1 (strain IAI39 / ExPEC).